We begin with the raw amino-acid sequence, 149 residues long: Hydrogenase expression/formation protein HupT (149 aa).

Belongs to the HupJ family.

This chain is Hydrogenase expression/formation protein HupT (hupT), found in Azotobacter chroococcum mcd 1.